A 417-amino-acid polypeptide reads, in one-letter code: Serine hydroxymethyltransferase (417 aa).

Residues L121 and G125–L127 contribute to the (6S)-5,6,7,8-tetrahydrofolate site. K230 is modified (N6-(pyridoxal phosphate)lysine). (6S)-5,6,7,8-tetrahydrofolate is bound at residue S355–F357.

Belongs to the SHMT family. As to quaternary structure, homodimer. It depends on pyridoxal 5'-phosphate as a cofactor.

The protein resides in the cytoplasm. It catalyses the reaction (6R)-5,10-methylene-5,6,7,8-tetrahydrofolate + glycine + H2O = (6S)-5,6,7,8-tetrahydrofolate + L-serine. It participates in one-carbon metabolism; tetrahydrofolate interconversion. The protein operates within amino-acid biosynthesis; glycine biosynthesis; glycine from L-serine: step 1/1. Its function is as follows. Catalyzes the reversible interconversion of serine and glycine with tetrahydrofolate (THF) serving as the one-carbon carrier. This reaction serves as the major source of one-carbon groups required for the biosynthesis of purines, thymidylate, methionine, and other important biomolecules. Also exhibits THF-independent aldolase activity toward beta-hydroxyamino acids, producing glycine and aldehydes, via a retro-aldol mechanism. In Marinobacter nauticus (strain ATCC 700491 / DSM 11845 / VT8) (Marinobacter aquaeolei), this protein is Serine hydroxymethyltransferase.